Here is a 226-residue protein sequence, read N- to C-terminus: Octanoyltransferase (226 aa).

Positions 31–226 constitute a BPL/LPL catalytic domain; it reads PETPDALWIC…SQKLGTYLAP (196 aa). Residues 70–77, 159–161, and 172–174 contribute to the substrate site; these read RGGQVTFH, ALG, and GVA. The active-site Acyl-thioester intermediate is C190.

Belongs to the LipB family.

It is found in the cytoplasm. The catalysed reaction is octanoyl-[ACP] + L-lysyl-[protein] = N(6)-octanoyl-L-lysyl-[protein] + holo-[ACP] + H(+). It participates in protein modification; protein lipoylation via endogenous pathway; protein N(6)-(lipoyl)lysine from octanoyl-[acyl-carrier-protein]: step 1/2. Catalyzes the transfer of endogenously produced octanoic acid from octanoyl-acyl-carrier-protein onto the lipoyl domains of lipoate-dependent enzymes. Lipoyl-ACP can also act as a substrate although octanoyl-ACP is likely to be the physiological substrate. The protein is Octanoyltransferase of Variovorax paradoxus (strain S110).